We begin with the raw amino-acid sequence, 473 residues long: 3-isopropylmalate dehydratase large subunit (473 aa).

[4Fe-4S] cluster-binding residues include C348, C408, and C411.

The protein belongs to the aconitase/IPM isomerase family. LeuC type 1 subfamily. Heterodimer of LeuC and LeuD. [4Fe-4S] cluster is required as a cofactor.

The enzyme catalyses (2R,3S)-3-isopropylmalate = (2S)-2-isopropylmalate. It participates in amino-acid biosynthesis; L-leucine biosynthesis; L-leucine from 3-methyl-2-oxobutanoate: step 2/4. Its function is as follows. Catalyzes the isomerization between 2-isopropylmalate and 3-isopropylmalate, via the formation of 2-isopropylmaleate. The protein is 3-isopropylmalate dehydratase large subunit of Haloarcula marismortui (strain ATCC 43049 / DSM 3752 / JCM 8966 / VKM B-1809) (Halobacterium marismortui).